A 1016-amino-acid chain; its full sequence is Calmodulin-binding transcription activator 4 (1016 aa).

Positions 38–164 form a DNA-binding region, CG-1; the sequence is ISTLYQEAHS…YRDVSEREEG (127 aa). Positions 324-343 are disordered; that stretch reads KNGSGPSGGTGGSGDQGSES. Over residues 328–338 the composition is skewed to gly residues; the sequence is GPSGGTGGSGD. ANK repeat units lie at residues 647 to 676, 680 to 709, and 719 to 748; these read QEQG…NVDF, KGWS…SAGA, and NGKT…TNHL. The tract at residues 753-786 is disordered; it reads LEETENSKDTAQVQTEKTLNSISEQSPSGNEDQV. Residues 761–785 are compositionally biased toward polar residues; the sequence is DTAQVQTEKTLNSISEQSPSGNEDQ. 3 IQ domains span residues 798 to 827, 855 to 884, and 878 to 907; these read AAQA…LVAC, YNSA…KVVK, and LRQK…AVRI. The calmodulin-binding stretch occupies residues 903–925; the sequence is WAVRILDKVVLRWRRKGVGLRGF. 2 positions are modified to phosphoserine: Ser-935 and Ser-962.

It belongs to the CAMTA family. As to expression, expressed in roots, stems, leaves, flowers and siliques.

It is found in the nucleus. Its function is as follows. Transcription activator that binds to the DNA consensus sequence 5'-[ACG]CGCG[GTC]-3'. Regulates transcriptional activity in response to calcium signals. Binds calmodulin in a calcium-dependent manner. Involved together with CAMTA2 and CAMTA3 in the positive regulation of a general stress response. This Arabidopsis thaliana (Mouse-ear cress) protein is Calmodulin-binding transcription activator 4.